The sequence spans 226 residues: 3-dehydroquinate dehydratase (226 aa).

Residues 30 to 32 and R62 contribute to the 3-dehydroquinate site; that span reads EWR. The Proton donor/acceptor role is filled by H118. The active-site Schiff-base intermediate with substrate is the K143. 3 residues coordinate 3-dehydroquinate: R186, S205, and Q209.

It belongs to the type-I 3-dehydroquinase family. In terms of assembly, homodimer.

It carries out the reaction 3-dehydroquinate = 3-dehydroshikimate + H2O. It functions in the pathway metabolic intermediate biosynthesis; chorismate biosynthesis; chorismate from D-erythrose 4-phosphate and phosphoenolpyruvate: step 3/7. Functionally, involved in the third step of the chorismate pathway, which leads to the biosynthesis of aromatic amino acids. Catalyzes the cis-dehydration of 3-dehydroquinate (DHQ) and introduces the first double bond of the aromatic ring to yield 3-dehydroshikimate. The chain is 3-dehydroquinate dehydratase from Streptococcus equi subsp. zooepidemicus (strain H70).